Reading from the N-terminus, the 97-residue chain is Small ribosomal subunit protein bS6 (97 aa).

Belongs to the bacterial ribosomal protein bS6 family.

Binds together with bS18 to 16S ribosomal RNA. The protein is Small ribosomal subunit protein bS6 (rpsF) of Lactococcus lactis subsp. lactis (strain IL1403) (Streptococcus lactis).